The chain runs to 266 residues: Putative carbamate hydrolase RutD (266 aa).

Belongs to the AB hydrolase superfamily. Hydrolase RutD family.

It carries out the reaction carbamate + 2 H(+) = NH4(+) + CO2. Its function is as follows. Involved in pyrimidine catabolism. May facilitate the hydrolysis of carbamate, a reaction that can also occur spontaneously. This Escherichia coli (strain B / BL21-DE3) protein is Putative carbamate hydrolase RutD.